A 179-amino-acid chain; its full sequence is Calcineurin subunit B type 2 (179 aa).

Residue Gly-2 is the site of N-myristoyl glycine attachment. 4 consecutive EF-hand domains span residues Glu-18–Pro-53, Arg-57–Lys-85, Asp-87–Asn-122, and Gln-128–His-163. Residues Asp-31, Asp-33, Ser-35, Ser-37, Glu-42, Asp-63, Asp-65, Asn-67, Glu-69, Glu-74, Asp-100, Asp-102, Asp-104, and Glu-111 each contribute to the Ca(2+) site. Positions Gln-131–Ser-136 are calcineurin A binding. 5 residues coordinate Ca(2+): Asp-141, Asp-143, Asp-145, Arg-147, and Glu-152.

Belongs to the calcineurin regulatory subunit family. Forms a complex composed of a calmodulin-dependent catalytic subunit (also known as calcineurin A) and a regulatory Ca(2+)-binding subunit (also known as calcineurin B). There are three catalytic subunits, each encoded by a separate gene (PPP3CA, PPP3CB, and PPP3CC) and two regulatory subunits which are also encoded by separate genes (PPP3R1 and PPP3R2). Interacts with SPATA33 (via PQIIIT motif). As to expression, expressed in osteoblasts and bone marrow (at protein level). Expressed in the testis. Expressed in the sperm midpiece in a SPATA33-dependent manner (at protein level).

The protein localises to the mitochondrion. Regulatory subunit of calcineurin, a calcium-dependent, calmodulin stimulated protein phosphatase. Confers calcium sensitivity. The sequence is that of Calcineurin subunit B type 2 (Ppp3r2) from Mus musculus (Mouse).